The chain runs to 502 residues: UPF0371 protein CLB_0371 (502 aa).

Belongs to the UPF0371 family.

The protein is UPF0371 protein CLB_0371 of Clostridium botulinum (strain ATCC 19397 / Type A).